We begin with the raw amino-acid sequence, 278 residues long: Asnovolin E/Chermesin D methyltransferase nvfJ (278 aa).

Residues 125–126, 152–153, and 153–154 each bind S-adenosyl-L-methionine; these read DL, NI, and IL.

It belongs to the class I-like SAM-binding methyltransferase superfamily. Homodimer.

The catalysed reaction is chermesin D + S-adenosyl-L-methionine = chermesin D methyl ester + S-adenosyl-L-homocysteine. It carries out the reaction asnovolin I + S-adenosyl-L-methionine = asnovolin K + S-adenosyl-L-homocysteine. Its pathway is secondary metabolite biosynthesis; terpenoid biosynthesis. Functionally, methyltransferase; part of the gene cluster that mediates the biosynthesis of novofumigatonin, a heavily oxygenated meroterpenoid containing a unique orthoester moiety. The first step of the pathway is the synthesis of 3,5-dimethylorsellinic acid (DMOA) by the polyketide synthase nvfA via condensation of one acetyl-CoA starter unit with 3 malonyl-CoA units and 2 methylations. DMOA is then converted to farnesyl-DMOA by the farnesyltransferase nvfB. Epoxydation by FAD-dependent monooxygenase nvfK, followed by a protonation-initiated cyclization catalyzed by the terpene cyclase nvfL leads to the production of asnavolin H. The short chain dehydrogenase nvfC then as a 3-OH dehydrogenase of asnovolin H to yield chemesin D. There are two branches to synthesize asnovolin A from chemesin D. In one branch, chemesin D undergoes Baeyer-Villiger oxidation by nvfH, methylation by nvfJ, and enoyl reduction by the nvfM D enoylreductase that reduces the double bond between C-5'and C-6', to form respectively asnovolin I, asnovolin K, and asnovolin A. In the other branch, the methylation precedes the Baeyer-Villiger oxidation and the enoyl reduction to yield asnovolin A via the asnovolin J intermediate. Asnovolin A is further converted to fumigatonoid A by the Fe(II)/2-oxoglutarate-dependent dioxygenase nvfI that catalyzes an endoperoxidation reaction. The alpha/beta hydrolase nvfD then acts as an epimerase that converts fumigatonoid A to its C-5' epimer, which then undergoes spontaneous or nvfD-catalyzed lactonization. The following step utilizes the ketoreductase nvfG to produce fumigatonoid B. The dioxygenase nvfE further converts fumigatonoid B into fumigatonoid C. Finally the Fe(II)/2-oxoglutarate-dependent dioxygenase nvfF catalyzes two rounds of oxidation to transform fumigatonoid C into the end product, novofumigatonin A. The polypeptide is Asnovolin E/Chermesin D methyltransferase nvfJ (Aspergillus novofumigatus (strain IBT 16806)).